The following is a 187-amino-acid chain: PsbQ-like protein 3, chloroplastic (187 aa).

A chloroplast-targeting transit peptide spans 1–32 (MAISKPPPLHFTFFHNQDSSIDTSDSNLALSI). The transit peptide at 33–60 (DTSRRRRDVLLTISGTLIPQLFFFDRKR) directs the protein to the thylakoid.

The protein belongs to the PsbQ family. Subunit of the lumenal protuberance of the NDH complex.

The protein localises to the plastid. The protein resides in the chloroplast thylakoid membrane. Functionally, required for both formation and activity of the chloroplast NAD(P)H dehydrogenase (NDH) complex. The chain is PsbQ-like protein 3, chloroplastic (PQL3) from Arabidopsis thaliana (Mouse-ear cress).